Here is a 245-residue protein sequence, read N- to C-terminus: Orotidine 5'-phosphate decarboxylase (245 aa).

Residues Asp22, Lys44, 71–80 (DLKFHDIPNT), Thr131, Arg192, Gln201, Gly221, and Arg222 each bind substrate. The active-site Proton donor is Lys73.

Belongs to the OMP decarboxylase family. Type 1 subfamily. Homodimer.

The enzyme catalyses orotidine 5'-phosphate + H(+) = UMP + CO2. It participates in pyrimidine metabolism; UMP biosynthesis via de novo pathway; UMP from orotate: step 2/2. In terms of biological role, catalyzes the decarboxylation of orotidine 5'-monophosphate (OMP) to uridine 5'-monophosphate (UMP). The protein is Orotidine 5'-phosphate decarboxylase of Salmonella paratyphi A (strain ATCC 9150 / SARB42).